A 432-amino-acid polypeptide reads, in one-letter code: Trigger factor (432 aa).

The region spanning 161–246 (EDRVTIDFTG…LKKVEERELP (86 aa)) is the PPIase FKBP-type domain.

The protein belongs to the FKBP-type PPIase family. Tig subfamily. In terms of assembly, homodimer and monomer. In vivo most of the ribosomes are in complex with monomeric TF. Uncomplexed TF, however, is in a monomer-dimer equilibrium with approximately two thirds of TF existing in a dimeric state.

It localises to the cytoplasm. It carries out the reaction [protein]-peptidylproline (omega=180) = [protein]-peptidylproline (omega=0). Involved in protein export. Acts as a chaperone by maintaining the newly synthesized protein in an open conformation. Functions as a peptidyl-prolyl cis-trans isomerase. This Shigella dysenteriae serotype 1 (strain Sd197) protein is Trigger factor.